A 311-amino-acid chain; its full sequence is Glycosyltransferase 6 domain-containing protein 1 (311 aa).

Over 1 to 5 (MKAKR) the chain is Cytoplasmic. The chain crosses the membrane as a helical; Signal-anchor for type II membrane protein span at residues 6–26 (RILLQLLTFCLFLLLLAKIHF). The Lumenal segment spans residues 27–311 (RNHQEEELLL…KIAHHPIDTL (285 aa)). A glycan (N-linked (GlcNAc...) asparagine) is linked at Asn-77. Residues 85–90 (FAVGSL), 176–178 (NIN), and 198–201 (HPWW) each bind substrate. Glu-266 functions as the Nucleophile in the catalytic mechanism.

It belongs to the glycosyltransferase 6 family. Requires Mn(2+) as cofactor.

The protein resides in the membrane. The polypeptide is Glycosyltransferase 6 domain-containing protein 1 (Glt6d1) (Mus musculus (Mouse)).